The primary structure comprises 186 residues: Hydra actinoporin-like toxin 1 (186 aa).

The first 18 residues, 1–18 (MLLYICLVNLLLPLSVGA), serve as a signal peptide directing secretion. Positions 29 to 48 (KVGVDAALQQIDDVWKGKTV) are N-terminal region. The Cell attachment site, crucial for protein stability signature appears at 158–160 (RAG).

This sequence belongs to the actinoporin family. HALT subfamily. Octamer or nonamer in membranes. Monomer in the soluble state. In vitro, interacts with folate receptor alpha (of target organism). As to expression, expressed female germline during oogenesis.

It localises to the nematocyst. The protein resides in the secreted. It is found in the target cell membrane. In terms of biological role, pore-forming protein that forms hydrophilic pores and causes cytolysis. Compared to equinatoxin-2 (AC P61914), it reveals lower cytolysis activity (5-12-fold difference, tested on erythrocytes), a larger pore size (probably 2-3 nm) and different affinity to membrane lipids (100-fold lower affinity to sphingomyelin). Binds to sulfatides (SFT) as well as to the two sphingolipids, lysophosphatidic acid (LPA) and sphingosine-1-phosphate (S1P). It seems to bind more strongly to LPA than to S1P and SFT. Shows cytolytic activity on HeLa cells, with a different potency than its paralogs (from most potent to less potent: HALT-4&gt;HALT-6~HALT-1&gt;HALT-3&gt;HALT-7&gt;HALT-2). Pore formation is a multi-step process that involves specific recognition of membrane lipid by a protein aromatic residues rich region, firm binding to the membrane (mainly driven by hydrophobic interactions) accompanied by the transfer of the N-terminal region to the lipid-water interface and finally pore formation after oligomerization of monomers. In vitro, binds to the folate receptor alpha (FOLR1), a GPI-anchored membrane protein that plays a major role in the uptake of folate/folic acid into cells via endocytosis, suggesting a possible involvement of this receptor in the mechanism of HALT-1-induced cell lysis. In vivo, does not cause visible paralysis in larvae of the blowfly Sarcophaga faculata, the most common arthropod prey of Hydra. The polypeptide is Hydra actinoporin-like toxin 1 (Hydra vulgaris (Hydra)).